The sequence spans 190 residues: dCTP deaminase (190 aa).

Residues lysine 111 to arginine 116, threonine 135 to glutamate 137, glutamine 156, tyrosine 172, and glutamine 182 contribute to the dCTP site. The active-site Proton donor/acceptor is glutamate 137.

The protein belongs to the dCTP deaminase family. In terms of assembly, homotrimer.

The catalysed reaction is dCTP + H2O + H(+) = dUTP + NH4(+). Its pathway is pyrimidine metabolism; dUMP biosynthesis; dUMP from dCTP (dUTP route): step 1/2. Its function is as follows. Catalyzes the deamination of dCTP to dUTP. The chain is dCTP deaminase from Stenotrophomonas maltophilia (strain R551-3).